The chain runs to 403 residues: Presqualene diphosphate synthase (403 aa).

Residues Asp84, Glu87, and Asp88 each contribute to the Mg(2+) site.

It belongs to the phytoene/squalene synthase family. It depends on Mg(2+) as a cofactor.

The enzyme catalyses 2 (2E,6E)-farnesyl diphosphate = presqualene diphosphate + diphosphate. Its function is as follows. Catalyzes the biosynthesis of presqualene diphosphate (PSPP). Works in combination with SSL-2 or SSL-3 to produce respectively squalene or botryococcene. In most other species, farnesyl diphosphate (FPP) is converted into squalene in a two-step reaction by a single enzyme. The polypeptide is Presqualene diphosphate synthase (SSL-1) (Botryococcus braunii (Green alga)).